We begin with the raw amino-acid sequence, 952 residues long: MSPTSETAKGGRRLVIVESPAKAKTIKGYLGPGYVVEASVGHIRDLPSGAAEVPEKYTGEVRRLGVDVEHDFQPIYVVNADKKSQVKKLKDLLKESDELFLATDEDREGEAIAWHLQEVLKPKIPVKRMVFHEITKDAIRAAVANPRELNQKLVDAQETRRILDRLYGYEVSPVLWKKVMPRLSAGRVQSVATRLVVERERERIAFRSAEYWDLTGTFATGRAGDASDPSSLVARLQTVDGRRVAQGRDFDSLGQLKSANTLHLDEANARALAAALENTRFAVRSVESKPYRRSPYAPFRTTTLQQEASRKLGFGAKSTMQVAQKLYENGYITYMRTDSTTLSDTAVSAARAQVTQLYGADYLPPQPRTYAGKVKNAQEAHEAIRPSGDRFRTPAETGLTGDQFKLYELIWKRTVASQMKDATGNSVTVKIGGAASDGRDVEFSASGKTITFHGFLKAYVEGADDPNAELDDRERRLPQVAEGDALTAEEITVDGHATKPPARYTEASLVKELEEREIGRPSTYASIIGTILDRGYVFKKGTALVPSFLSFAVVNLLEKHFGRLVDYDFTARMEDDLDRIARGEAQSVPWLRRFYFGEGDGTGGGGAADAGNGDGDHLGGLKELVTDLGAIDAREVSSFPVGNDIKLRVGRYGPYVERGEKDAENHQRADVPEDLAPDELSVELAEELLAKPSGDFELGTDPATGHAIVAKDGRYGPYVTEVLPEGTPKTGKNAVKPRTASLFKSMSLDTVTLDDALKLMSLPRVVGADAEGVEITAQNGRYGPYLKKGTDSRSLQTEDQLFEITLEEALAIYAQPKQRGRAAAKPPLKELGTDPVSEKPVVVKDGRFGPYVTDGETNATLRSDDSVEEITPERGYELLAEKRAKGPAKKTAKKAVKKTAAKKAPAKKAAATKKTAAAKTTAAKKTAAKSTAKKTTAKTAAKKATASKTSED.

Residues 12–135 (RRLVIVESPA…VKRMVFHEIT (124 aa)) form the Toprim domain. Positions 18 and 104 each coordinate Mg(2+). The Topo IA-type catalytic domain occupies 150 to 602 (NQKLVDAQET…RFYFGEGDGT (453 aa)). Residues 184 to 189 (SAGRVQ) form an interaction with DNA region. The active-site O-(5'-phospho-DNA)-tyrosine intermediate is the Tyr-334. The disordered stretch occupies residues 847-952 (RFGPYVTDGE…KATASKTSED (106 aa)). Residues 871–884 (TPERGYELLAEKRA) show a composition bias toward basic and acidic residues. Residues 885 to 906 (KGPAKKTAKKAVKKTAAKKAPA) are compositionally biased toward basic residues. Composition is skewed to low complexity over residues 907–930 (KKAA…AAKS) and 937–952 (AKTA…TSED).

It belongs to the type IA topoisomerase family. Monomer. Mg(2+) is required as a cofactor.

The catalysed reaction is ATP-independent breakage of single-stranded DNA, followed by passage and rejoining.. Functionally, releases the supercoiling and torsional tension of DNA, which is introduced during the DNA replication and transcription, by transiently cleaving and rejoining one strand of the DNA duplex. Introduces a single-strand break via transesterification at a target site in duplex DNA. The scissile phosphodiester is attacked by the catalytic tyrosine of the enzyme, resulting in the formation of a DNA-(5'-phosphotyrosyl)-enzyme intermediate and the expulsion of a 3'-OH DNA strand. The free DNA strand then undergoes passage around the unbroken strand, thus removing DNA supercoils. Finally, in the religation step, the DNA 3'-OH attacks the covalent intermediate to expel the active-site tyrosine and restore the DNA phosphodiester backbone. In terms of biological role, relaxes supercoiled plasmid in vitro; in the presence of sIHF (integration host factor) relaxation is decreased. This Streptomyces coelicolor (strain ATCC BAA-471 / A3(2) / M145) protein is DNA topoisomerase 1.